The chain runs to 321 residues: Putative membrane-bound redox modulator Alx (321 aa).

The Periplasmic portion of the chain corresponds to 1 to 6; it reads MNTVGT. Residues 7–27 form a helical membrane-spanning segment; it reads PLLWGGFAVVVAIMLAIDLLL. Topologically, residues 28–43 are cytoplasmic; the sequence is QGRRGAHAMTMKQAAA. Residues 44 to 64 form a helical membrane-spanning segment; it reads WSLVWVTLSLLFNAAFWWYLV. Topologically, residues 65–89 are periplasmic; sequence QTEGRAVADPQALAFLTGYLIEKSL. Residues 90 to 110 form a helical membrane-spanning segment; that stretch reads AVDNVFVWLMLFSYFSVPAAL. The Cytoplasmic segment spans residues 111-113; it reads QRR. The helical transmembrane segment at 114–134 threads the bilayer; the sequence is VLVYGVLGAIVLRTIMIFTGS. Position 135 (W135) is a topological domain, periplasmic. Residues 136-156 form a helical membrane-spanning segment; sequence LISQFDWILYIFGAFLLFTGV. The Cytoplasmic segment spans residues 157–198; the sequence is KMALAHEDESGIGDKPLVRWLRGHLRMTDTIDNEHFFVRKNG. A helical membrane pass occupies residues 199–219; sequence LLYATPLMLVLILVELSDVIF. Topologically, residues 220–225 are periplasmic; that stretch reads AVDSIP. The helical transmembrane segment at 226–246 threads the bilayer; the sequence is AIFAVTTDPFIVLTSNLFAIL. Topologically, residues 247–261 are cytoplasmic; it reads GLRAMYFLLAGVAER. A helical transmembrane segment spans residues 262–282; it reads FSMLKYGLAVILVFIGIKMLI. At 283 to 286 the chain is on the periplasmic side; the sequence is VDFY. The chain crosses the membrane as a helical span at residues 287 to 307; the sequence is HIPIAVSLGVVFGILVMTFII. At 308–321 the chain is on the cytoplasmic side; sequence NAWVNYRHDKQRVG.

It belongs to the TerC family.

The protein resides in the cell inner membrane. In terms of biological role, has been proposed to be a redox modulator. The chain is Putative membrane-bound redox modulator Alx (alx) from Escherichia coli O157:H7.